The chain runs to 69 residues: Cold shock-like protein CspE (69 aa).

One can recognise a CSD domain in the interval 6–66 (GNVKWFNESK…GAKGPSAANV (61 aa)).

It is found in the cytoplasm. This Escherichia coli O6:H1 (strain CFT073 / ATCC 700928 / UPEC) protein is Cold shock-like protein CspE (cspE).